We begin with the raw amino-acid sequence, 207 residues long: uncharacterized protein (207 aa).

This is an uncharacterized protein from Frog virus 3 (isolate Goorha) (FV-3).